A 956-amino-acid polypeptide reads, in one-letter code: DNA replication helicase (956 aa).

Position 120–127 (Gly-120–Thr-127) interacts with ATP. Residues Pro-658 to Ser-694 form a disordered region. Positions Ser-667–Gln-678 are enriched in low complexity. Positions Arg-679–Ser-694 are enriched in basic and acidic residues.

This sequence belongs to the herpesviridae helicase family. As to quaternary structure, associates with the primase and the primase-associated factor to form the helicase-primase complex.

It is found in the host nucleus. In terms of biological role, component of the helicase/primase complex. Unwinds the DNA at the replication forks and generates single-stranded DNA for both leading and lagging strand synthesis. The primase synthesizes short RNA primers on the lagging strand that the polymerase elongates using dNTPs. Possesses helicase-like motifs and therefore may act as the helicase subunit of the complex. The protein is DNA replication helicase of Human cytomegalovirus (strain AD169) (HHV-5).